We begin with the raw amino-acid sequence, 388 residues long: GTPase Obg (388 aa).

Residues 1–159 (MKFVDEANIR…RSIKLELLLL (159 aa)) form the Obg domain. Positions 160 to 333 (ADVGLLGMPN…LSIKMLDYIR (174 aa)) constitute an OBG-type G domain. Residues 166–173 (GMPNAGKS), 191–195 (FTTLV), 213–216 (DIPG), 283–286 (NKTD), and 314–316 (SAY) each bind GTP. Mg(2+)-binding residues include Ser173 and Thr193.

This sequence belongs to the TRAFAC class OBG-HflX-like GTPase superfamily. OBG GTPase family. Monomer. Mg(2+) serves as cofactor.

It is found in the cytoplasm. Functionally, an essential GTPase which binds GTP, GDP and possibly (p)ppGpp with moderate affinity, with high nucleotide exchange rates and a fairly low GTP hydrolysis rate. Plays a role in control of the cell cycle, stress response, ribosome biogenesis and in those bacteria that undergo differentiation, in morphogenesis control. In Shewanella frigidimarina (strain NCIMB 400), this protein is GTPase Obg.